A 369-amino-acid polypeptide reads, in one-letter code: Chaperone protein DnaJ (369 aa).

Residues 7–73 (DYYEILGVPR…QKRAMYDRFG (67 aa)) form the J domain. Residues 143–225 (GAEIPVEYER…CGGSGRVLRK (83 aa)) form a CR-type zinc finger. Zn(2+) is bound by residues cysteine 156, cysteine 159, cysteine 173, cysteine 176, cysteine 199, cysteine 202, cysteine 213, and cysteine 216. 4 CXXCXGXG motif repeats span residues 156 to 163 (CPRCGGTG), 173 to 180 (CPSCGGTG), 199 to 206 (CERCGGTG), and 213 to 220 (CHECGGSG).

The protein belongs to the DnaJ family. In terms of assembly, homodimer. Zn(2+) is required as a cofactor.

It is found in the cytoplasm. In terms of biological role, participates actively in the response to hyperosmotic and heat shock by preventing the aggregation of stress-denatured proteins and by disaggregating proteins, also in an autonomous, DnaK-independent fashion. Unfolded proteins bind initially to DnaJ; upon interaction with the DnaJ-bound protein, DnaK hydrolyzes its bound ATP, resulting in the formation of a stable complex. GrpE releases ADP from DnaK; ATP binding to DnaK triggers the release of the substrate protein, thus completing the reaction cycle. Several rounds of ATP-dependent interactions between DnaJ, DnaK and GrpE are required for fully efficient folding. Also involved, together with DnaK and GrpE, in the DNA replication of plasmids through activation of initiation proteins. This Thermotoga maritima (strain ATCC 43589 / DSM 3109 / JCM 10099 / NBRC 100826 / MSB8) protein is Chaperone protein DnaJ.